The chain runs to 375 residues: Growth/differentiation factor 8 (375 aa).

An N-terminal signal peptide occupies residues M1–L23. The propeptide occupies N24–R266. N71 is a glycosylation site (N-linked (GlcNAc...) asparagine). 4 disulfide bridges follow: C272-C282, C281-C340, C309-C372, and C313-C374.

This sequence belongs to the TGF-beta family. In terms of assembly, homodimer; disulfide-linked. Interacts with WFIKKN2, leading to inhibit its activity. Interacts with FSTL3. Post-translationally, synthesized as large precursor molecule that undergoes proteolytic cleavage to generate an N-terminal propeptide and a disulfide linked C-terminal dimer, which is the biologically active molecule. The circulating form consists of a latent complex of the C-terminal dimer and other proteins, including its propeptide, which maintain the C-terminal dimer in a latent, inactive state. Ligand activation requires additional cleavage of the prodomain by a tolloid-like metalloproteinase.

The protein localises to the secreted. Functionally, acts specifically as a negative regulator of skeletal muscle growth. This chain is Growth/differentiation factor 8 (MSTN), found in Papio hamadryas (Hamadryas baboon).